The primary structure comprises 857 residues: Elongation factor 2 (857 aa).

One can recognise a tr-type G domain in the interval 17 to 362; the sequence is ANIRNMSVIA…MITIHLPSPV (346 aa). 26-33 contributes to the GTP binding site; sequence AHVDHGKS. Residues Thr54, Thr57, and Thr59 each carry the phosphothreonine modification. Lys152 is modified (N6-succinyllysine). Residues 158–161 and 216–218 contribute to the GTP site; these read NKMD and SGL. The residue at position 235 (Lys235) is an N6-acetyllysine. At Lys239 the chain carries N6-acetyllysine; alternate. A Glycyl lysine isopeptide (Lys-Gly) (interchain with G-Cter in SUMO1); alternate cross-link involves residue Lys239. A Phosphotyrosine modification is found at Tyr265. An N6-acetyllysine; alternate modification is found at Lys272. Residue Lys272 is modified to N6-succinyllysine; alternate. An N6-acetyllysine modification is found at Lys275. A Glycyl lysine isopeptide (Lys-Gly) (interchain with G-Cter in SUMO) cross-link involves residue Lys322. Position 325 is a phosphoserine (Ser325). Phosphotyrosine is present on Tyr373. Residue Thr435 is modified to Phosphothreonine. N6-acetyllysine occurs at positions 439 and 445. Ser502 carries the post-translational modification Phosphoserine. Lys525 carries the post-translational modification N6,N6,N6-trimethyllysine. A Glycyl lysine isopeptide (Lys-Gly) (interchain with G-Cter in SUMO) cross-link involves residue Lys529. The residue at position 572 (Lys572) is an N6-succinyllysine. Position 595 is a phosphoserine (Ser595). Lys619 is modified (N6-acetyllysine). His715 carries the post-translational modification Diphthamide.

It belongs to the GTP-binding elongation factor family. EF-G/EF-2 subfamily. In terms of assembly, binds to 80S ribosomes. Actively translating ribosomes show mutually exclusive binding of eIF5a (EIF5A or EIF5A2) and EEF2/eEF2. Interacts with SERBP1; interaction sequesters EEF2/eEF2 at the A-site of the ribosome, thereby blocking the interaction sites of the mRNA-tRNA complex, promoting ribosome stabilization and hibernation. Interacts with HABP4; interaction takes place at the A-site of hibernating ribosomes and promotes ribosome stabilization. Component of the mRNA surveillance SURF complex, at least composed of ERF1, ERF3 (ERF3A or ERF3B), EEF2, UPF1/RENT1, SMG1, SMG8 and SMG9. Interacts with RBPMS2. Phosphorylation by EF-2 kinase completely inactivates EF-2; it requires prior phosphorylation by CDK2 at Ser-595 during mitotic prometaphase. Phosphorylation by CSK promotes SUMOylation, proteolytic cleavage, and nuclear translocation if the C-terminal fragment. In terms of processing, diphthamide is 2-[3-carboxyamido-3-(trimethyl-ammonio)propyl]histidine. Post-translationally, ISGylated. Proteolytically processed at two sites following phosphorylation by CSK. In terms of processing, SUMOylated following phosphorylation by CSK, promotes proteolytic cleavage.

It localises to the cytoplasm. The protein localises to the nucleus. The enzyme catalyses GTP + H2O = GDP + phosphate + H(+). In terms of biological role, catalyzes the GTP-dependent ribosomal translocation step during translation elongation. During this step, the ribosome changes from the pre-translocational (PRE) to the post-translocational (POST) state as the newly formed A-site-bound peptidyl-tRNA and P-site-bound deacylated tRNA move to the P and E sites, respectively. Catalyzes the coordinated movement of the two tRNA molecules, the mRNA and conformational changes in the ribosome. In Oryctolagus cuniculus (Rabbit), this protein is Elongation factor 2 (EEF2).